The following is a 142-amino-acid chain: Small ribosomal subunit protein uS9 (142 aa).

It belongs to the universal ribosomal protein uS9 family. As to quaternary structure, component of the small ribosomal subunit (SSU). Mature N.crassa ribosomes consist of a small (40S) and a large (60S) subunit. The 40S small subunit contains 1 molecule of ribosomal RNA (18S rRNA) and at least 32 different proteins. The large 60S subunit contains 3 rRNA molecules (26S, 5.8S and 5S rRNA) and at least 42 different proteins.

The protein resides in the cytoplasm. Component of the ribosome, a large ribonucleoprotein complex responsible for the synthesis of proteins in the cell. The small ribosomal subunit (SSU) binds messenger RNAs (mRNAs) and translates the encoded message by selecting cognate aminoacyl-transfer RNA (tRNA) molecules. The large subunit (LSU) contains the ribosomal catalytic site termed the peptidyl transferase center (PTC), which catalyzes the formation of peptide bonds, thereby polymerizing the amino acids delivered by tRNAs into a polypeptide chain. The nascent polypeptides leave the ribosome through a tunnel in the LSU and interact with protein factors that function in enzymatic processing, targeting, and the membrane insertion of nascent chains at the exit of the ribosomal tunnel. This chain is Small ribosomal subunit protein uS9 (rps-16), found in Neurospora crassa (strain ATCC 24698 / 74-OR23-1A / CBS 708.71 / DSM 1257 / FGSC 987).